The chain runs to 409 residues: uncharacterized protein (409 aa).

One can recognise an N-acetyltransferase domain in the interval 3-162 (TDVRVLRQDD…DDVRLRYAVP (160 aa)). Residues 82 to 84 (VSV), 90 to 95 (RRGVLT), and 118 to 119 (SE) contribute to the acetyl-CoA site. Tyrosine 123 functions as the Proton donor in the catalytic mechanism. Phenylalanine 409 functions as the Proton acceptor; via carboxylate in the catalytic mechanism.

Belongs to the acetyltransferase Eis family. In terms of assembly, homohexamer; trimer of dimers.

This is an uncharacterized protein from Streptomyces avermitilis (strain ATCC 31267 / DSM 46492 / JCM 5070 / NBRC 14893 / NCIMB 12804 / NRRL 8165 / MA-4680).